We begin with the raw amino-acid sequence, 618 residues long: Beta-glucosidase C (618 aa).

The signal sequence occupies residues 1 to 19; the sequence is MRVDSTVLALVALATDCLG. Asparagine 40, asparagine 82, asparagine 104, asparagine 211, and asparagine 263 each carry an N-linked (GlcNAc...) asparagine glycan. Aspartate 330 is an active-site residue. N-linked (GlcNAc...) asparagine glycans are attached at residues asparagine 417, asparagine 448, asparagine 477, asparagine 482, asparagine 502, and asparagine 517.

It belongs to the glycosyl hydrolase 3 family.

The protein localises to the secreted. It catalyses the reaction Hydrolysis of terminal, non-reducing beta-D-glucosyl residues with release of beta-D-glucose.. It functions in the pathway glycan metabolism; cellulose degradation. Its function is as follows. Beta-glucosidases are one of a number of cellulolytic enzymes involved in the degradation of cellulosic biomass. Catalyzes the last step releasing glucose from the inhibitory cellobiose. The chain is Beta-glucosidase C (bglC) from Emericella nidulans (strain FGSC A4 / ATCC 38163 / CBS 112.46 / NRRL 194 / M139) (Aspergillus nidulans).